Consider the following 146-residue polypeptide: Catabolic 3-dehydroquinase (146 aa).

Tyrosine 24 serves as the catalytic Proton acceptor. Residues asparagine 78, histidine 84, and aspartate 91 each contribute to the substrate site. Catalysis depends on histidine 104, which acts as the Proton donor. Substrate is bound by residues isoleucine 105–threonine 106 and arginine 115.

It belongs to the type-II 3-dehydroquinase family. As to quaternary structure, homododecamer. Adopts a ring-like structure, composed of an arrangement of two hexameric rings stacked on top of one another.

It carries out the reaction 3-dehydroquinate = 3-dehydroshikimate + H2O. Its pathway is aromatic compound metabolism; 3,4-dihydroxybenzoate biosynthesis; 3,4-dihydroxybenzoate from 3-dehydroquinate: step 1/2. Its function is as follows. Is involved in the catabolism of quinate. Allows the utilization of quinate as carbon source via the beta-ketoadipate pathway. This chain is Catabolic 3-dehydroquinase, found in Candida dubliniensis (strain CD36 / ATCC MYA-646 / CBS 7987 / NCPF 3949 / NRRL Y-17841) (Yeast).